The primary structure comprises 287 residues: 4-hydroxybenzoate octaprenyltransferase (287 aa).

9 helical membrane passes run 21–41 (VGIFLLLWPTLWAVWIAAKGA), 44–64 (FKIAVIFIAGSVVMRAAGCIV), 91–111 (VTEAMLLFAVLSLIAFTLVLL), 112–132 (LNRLTVELAVIGILLALVYPF), 139–159 (LPQLWLGVAFSWSIPMAFAAT), 160–180 (VGHVPAVAWLLFFAAVLWPIV), 211–231 (LMIGLLQGSVLLTFGLLGWYL), 235–255 (YWFYLGLLVALGLMCYQQFLI), and 263–283 (CFAAFRNNNWVGFFIFLGILL).

It belongs to the UbiA prenyltransferase family. Mg(2+) is required as a cofactor.

It localises to the cell inner membrane. It catalyses the reaction all-trans-octaprenyl diphosphate + 4-hydroxybenzoate = 4-hydroxy-3-(all-trans-octaprenyl)benzoate + diphosphate. The protein operates within cofactor biosynthesis; ubiquinone biosynthesis. Its function is as follows. Catalyzes the prenylation of para-hydroxybenzoate (PHB) with an all-trans polyprenyl group. Mediates the second step in the final reaction sequence of ubiquinone-8 (UQ-8) biosynthesis, which is the condensation of the polyisoprenoid side chain with PHB, generating the first membrane-bound Q intermediate 3-octaprenyl-4-hydroxybenzoate. The chain is 4-hydroxybenzoate octaprenyltransferase from Coxiella burnetii (strain CbuG_Q212) (Coxiella burnetii (strain Q212)).